Here is a 156-residue protein sequence, read N- to C-terminus: RNA pyrophosphohydrolase (156 aa).

The Nudix hydrolase domain occupies 6–148 (NYRPNVAAIV…KKNIYVKVIK (143 aa)). The Nudix box signature appears at 43–64 (GGIDKGESAKNALFRELKEEIG).

It belongs to the Nudix hydrolase family. RppH subfamily. It depends on a divalent metal cation as a cofactor.

Functionally, accelerates the degradation of transcripts by removing pyrophosphate from the 5'-end of triphosphorylated RNA, leading to a more labile monophosphorylated state that can stimulate subsequent ribonuclease cleavage. This chain is RNA pyrophosphohydrolase, found in Campylobacter jejuni subsp. doylei (strain ATCC BAA-1458 / RM4099 / 269.97).